The primary structure comprises 625 residues: Keratin, type II cytoskeletal 1 (625 aa).

The span at 1 to 12 (MSFQCSSRSLCR) shows a compositional bias: low complexity. The disordered stretch occupies residues 1–27 (MSFQCSSRSLCRSGGGGGGRNFSSGSA). Residues 1–178 (MSFQCSSRSL…DPQIQKVKSQ (178 aa)) form a head region. At Arg12 the chain carries Omega-N-methylarginine. Phosphoserine is present on residues Ser23 and Ser26. An Omega-N-methylarginine modification is found at Arg51. At Ser69 the chain carries Phosphoserine. Residues 171–319 (QIQKVKSQER…DIDFFSTLYQ (149 aa)) adopt a coiled-coil conformation. The tract at residues 179–214 (EREQIKSLNDKFASFIDKVRFLEQQNQVLQTKWELL) is coil 1A. One can recognise an IF rod domain in the interval 179-492 (EREQIKSLND…KLLEGEEIRM (314 aa)). A linker 1 region spans residues 215-233 (QQVDTSTRTQNLDPFFESY). Residues 234–325 (ISNLRRQVDS…TLYQMELSQM (92 aa)) are coil 1B. Position 275 is an N6,N6-dimethyllysine (Lys275). A linker 12 region spans residues 326–349 (QTQISETNVVLSMDNNRTLDLDGI). Residues 350-488 (IAEVKAQYDS…ATYRKLLEGE (139 aa)) are coil 2. Residues 388-475 (DSVKNTKMEI…ELMNTKLALD (88 aa)) are a coiled coil. Residues 489 to 625 (EIRMSGECTP…VSTTYSRGTN (137 aa)) form a tail region. Disordered stretches follow at residues 496–525 (CTPNVSVSVSTSHTSMSGTSSRGGGRYGSG) and 560–625 (SGGG…RGTN). The segment covering 500-515 (VSVSVSTSHTSMSGTS) has biased composition (low complexity). Composition is skewed to gly residues over residues 516 to 525 (SRGGGRYGSG) and 560 to 606 (SGGG…GGVK). An omega-N-methylarginine mark is found at Arg517, Arg574, and Arg596. The span at 613–625 (VKFVSTTYSRGTN) shows a compositional bias: polar residues.

This sequence belongs to the intermediate filament family. In terms of assembly, heterotetramer of two type I and two type II keratins. Heterodimer with KRT10. Two heterodimers of KRT1 and KRT10 form a heterotetramer. Forms a heterodimer with KRT14; the interaction is more abundant in the absence of KRT5. Interacts with ITGB1 in the presence of RACK1 and SRC, and with RACK1. Interacts with C1QBP; the association represents a cell surface kininogen receptor. Interacts with EPPK1; interaction is dependent of higher-order structure of intermediate filament. Post-translationally, undergoes deimination of some arginine residues (citrullination).

The protein resides in the cell membrane. The protein localises to the cytoplasm. Functionally, may regulate the activity of kinases such as PKC and SRC via binding to integrin beta-1 (ITB1) and the receptor of activated protein C kinase 1 (RACK1). In complex with C1QBP is a high affinity receptor for kininogen-1/HMWK. The sequence is that of Keratin, type II cytoskeletal 1 from Rattus norvegicus (Rat).